The sequence spans 679 residues: Transketolase 10 (679 aa).

His-40 is a substrate binding site. Residues His-80 and 129-131 each bind thiamine diphosphate; that span reads GPL. Asp-170 contacts Mg(2+). Residues Gly-171 and Asn-200 each coordinate thiamine diphosphate. Mg(2+) contacts are provided by Asn-200 and Ile-202. Positions 277, 371, and 398 each coordinate substrate. His-277 is a binding site for thiamine diphosphate. Thiamine diphosphate contacts are provided by Glu-425 and Phe-452. Glu-425 serves as the catalytic Proton donor. Positions 476, 484, and 535 each coordinate substrate.

The protein belongs to the transketolase family. As to quaternary structure, homodimer. Mg(2+) is required as a cofactor. It depends on Ca(2+) as a cofactor. The cofactor is Mn(2+). Co(2+) serves as cofactor. Requires thiamine diphosphate as cofactor. Leaves.

The catalysed reaction is D-sedoheptulose 7-phosphate + D-glyceraldehyde 3-phosphate = aldehydo-D-ribose 5-phosphate + D-xylulose 5-phosphate. Could be involved in the conversion of sugars, which are a major phenomenon in the rehydration process. Its function is as follows. Catalyzes the transfer of a two-carbon ketol group from a ketose donor to an aldose acceptor, via a covalent intermediate with the cofactor thiamine pyrophosphate. This Craterostigma plantagineum (Blue gem) protein is Transketolase 10 (TKT10).